We begin with the raw amino-acid sequence, 509 residues long: Erythropoietin receptor (509 aa).

Positions 1 to 24 (MYHFGATLWPGVGSLCLLLAGATW) are cleaved as a signal peptide. Topologically, residues 25–251 (APSPNSPDAK…SLLTASDLDP (227 aa)) are extracellular. Cystine bridges form between Cys-52-Cys-62 and Cys-91-Cys-107. A Fibronectin type-III domain is found at 148-248 (PPAGLLARRA…EPASLLTASD (101 aa)). N-linked (GlcNAc...) asparagine glycosylation occurs at Asn-184. Residues 234–238 (WSAWS) carry the WSXWS motif motif. The helical transmembrane segment at 252-274 (LILTLSLILVLILLLLAVLALLS) threads the bilayer. At 275–509 (HRRTLKQKIW…PSPPNYVTCS (235 aa)) the chain is on the cytoplasmic side. A Glycyl lysine isopeptide (Lys-Gly) (interchain with G-Cter in ubiquitin) cross-link involves residue Lys-282. The short motif at 283–291 (IWPGIPSPE) is the Box 1 motif element. Tyr-369 and Tyr-427 each carry phosphotyrosine; by JAK2. The ITIM motif signature appears at 453 to 458 (LKYLYL). Residue Lys-454 forms a Glycyl lysine isopeptide (Lys-Gly) (interchain with G-Cter in ubiquitin) linkage. A phosphotyrosine; by JAK2 mark is found at Tyr-455, Tyr-457, Tyr-469, Tyr-486, Tyr-490, and Tyr-505. The interval 467 to 509 (TDYSSGGSQETQGGSSSGPYSNPYENSLVPAPEPSPPNYVTCS) is disordered. A compositionally biased stretch (low complexity) spans 470-493 (SSGGSQETQGGSSSGPYSNPYENS).

The protein belongs to the type I cytokine receptor family. Type 1 subfamily. As to quaternary structure, forms homodimers on EPO stimulation. The tyrosine-phosphorylated form interacts with several SH2 domain-containing proteins including LYN, the adapter protein SH2B2, PTPN6, PTPN11, JAK2, PI3 kinases, STAT5A/B, SOCS3, CRKL. Interacts with INPP5D/SHIP1. SH2B2 binding inhibits the JAK-STAT signaling. Interacts with RHEX; this interaction occurs in a erythropoietin (EPO)-dependent manner. Interacts with ATXN2L. On EPO stimulation, phosphorylated on C-terminal tyrosine residues by JAK2. The phosphotyrosine motifs are also recruitment sites for several SH2-containing proteins and adapter proteins which mediate cell proliferation. Phosphorylation on Tyr-455 is required for PTPN6 interaction, Tyr-427 for PTPN11. Tyr-427 is also required for SOCS3 binding, but Tyr-455/Tyr-457 motif is the preferred binding site. In terms of processing, ubiquitinated by the ECS(SOCS2) complex following ligand-binding and phosphorylation by JAK2, leading to its degradation by the proteasome. Regulation by the ECS(SOCS2) complex acts as a negative feedback loop of erythropoietin-mediated signaling pathway. Ubiquitination at Lys-282 mediates receptor internalization, whereas ubiquitination at Lys-454 promotes trafficking of activated receptors to the lysosomes for degradation. Ubiquitinated by NOSIP; appears to be either multi-monoubiquitinated or polyubiquitinated. Ubiquitination mediates proliferation and survival of EPO-dependent cells.

It is found in the cell membrane. In terms of biological role, receptor for erythropoietin, which mediates erythropoietin-induced erythroblast proliferation and differentiation. Upon EPO stimulation, EPOR dimerizes triggering the JAK2/STAT5 signaling cascade. In some cell types, can also activate STAT1 and STAT3. May also activate the LYN tyrosine kinase. Functionally, isoform EPOR-T acts as a dominant-negative receptor of EPOR-mediated signaling. The protein is Erythropoietin receptor (EPOR) of Sus scrofa (Pig).